The following is a 323-amino-acid chain: MLDIAMPKIEVVTAAENYGRFKIEPLDPGYGHTLGNALRRVLLSSIPGAAITKIKIEGVFHEFSTIPGVKEDVTEIVLNIKGIRLRSYAERPVKISLSKRGAGVVRAADIDAPSNVEIVNPNHYICTIDRDDAAIDMEMTVERGRGYLPADQRDALPIGEIPIDAIFTPVPKVNYVVEHIRVGQATDIDSLLIEIWTDGTIKPGDALSHAAQVLVQYSQTIADFNRLSTEAEPTTAPNGLAIPADIYDTPIEELDLSTRTYNCLKRADITKVGQVLEMDEKALLSVRNLGQKSMEEIRDKLIERGYIPRIGQTSHAARAEIEG.

The segment at 1–225 is alpha N-terminal domain (alpha-NTD); the sequence is MLDIAMPKIE…QYSQTIADFN (225 aa). Residues 246–323 form an alpha C-terminal domain (alpha-CTD) region; that stretch reads IYDTPIEELD…SHAARAEIEG (78 aa).

The protein belongs to the RNA polymerase alpha chain family. Homodimer. The RNAP catalytic core consists of 2 alpha, 1 beta, 1 beta' and 1 omega subunit. When a sigma factor is associated with the core the holoenzyme is formed, which can initiate transcription.

The catalysed reaction is RNA(n) + a ribonucleoside 5'-triphosphate = RNA(n+1) + diphosphate. Its function is as follows. DNA-dependent RNA polymerase catalyzes the transcription of DNA into RNA using the four ribonucleoside triphosphates as substrates. The polypeptide is DNA-directed RNA polymerase subunit alpha (Roseiflexus sp. (strain RS-1)).